The primary structure comprises 126 residues: Large ribosomal subunit protein bL17 (126 aa).

Belongs to the bacterial ribosomal protein bL17 family. As to quaternary structure, part of the 50S ribosomal subunit. Contacts protein L32.

The polypeptide is Large ribosomal subunit protein bL17 (Coxiella burnetii (strain CbuK_Q154) (Coxiella burnetii (strain Q154))).